Consider the following 60-residue polypeptide: Large ribosomal subunit protein uL30 (60 aa).

The protein belongs to the universal ribosomal protein uL30 family. Part of the 50S ribosomal subunit.

The protein is Large ribosomal subunit protein uL30 of Streptococcus thermophilus (strain CNRZ 1066).